We begin with the raw amino-acid sequence, 444 residues long: Shufflon protein B' (444 aa).

The constant region stretch occupies residues 1–361 (MKKYDRGWAS…TGAILSCQSG (361 aa)). Residues 362 to 444 (TWRKVGSGEL…GSITVYAICQ (83 aa)) form a variable region region.

This Escherichia coli protein is Shufflon protein B'.